A 121-amino-acid chain; its full sequence is uncharacterized protein (121 aa).

Disordered regions lie at residues 24–43 (SGRT…GRGG) and 100–121 (DHEN…TDQR).

This is an uncharacterized protein from Homo sapiens (Human).